The primary structure comprises 442 residues: Signal recognition particle 54 kDa protein (442 aa).

Residues 106–113, 186–190, and 244–247 each bind GTP; these read GLQGSGKT, DTAGR, and TKLD.

The protein belongs to the GTP-binding SRP family. SRP54 subfamily. As to quaternary structure, part of the signal recognition particle protein translocation system, which is composed of SRP and FtsY. Archaeal SRP consists of a 7S RNA molecule of 300 nucleotides and two protein subunits: SRP54 and SRP19.

The protein localises to the cytoplasm. It catalyses the reaction GTP + H2O = GDP + phosphate + H(+). Involved in targeting and insertion of nascent membrane proteins into the cytoplasmic membrane. Binds to the hydrophobic signal sequence of the ribosome-nascent chain (RNC) as it emerges from the ribosomes. The SRP-RNC complex is then targeted to the cytoplasmic membrane where it interacts with the SRP receptor FtsY. The polypeptide is Signal recognition particle 54 kDa protein (Methanothermobacter thermautotrophicus (strain ATCC 29096 / DSM 1053 / JCM 10044 / NBRC 100330 / Delta H) (Methanobacterium thermoautotrophicum)).